An 843-amino-acid chain; its full sequence is Glycogen phosphorylase, brain form (843 aa).

Ala-2 is subject to N-acetylalanine. Ser-15 bears the Phosphoserine; by PHK; in form phosphorylase A mark. Residues Asp-43, Tyr-197, and Arg-310 each coordinate AMP. Position 197 is a phosphotyrosine (Tyr-197). The residue at position 473 (Tyr-473) is a Phosphotyrosine. Lys-569 contacts pyridoxal 5'-phosphate. Residues Thr-677–Gly-678 are pyridoxal 5'-phosphate. Position 681 is an N6-(pyridoxal phosphate)lysine (Lys-681).

It belongs to the glycogen phosphorylase family. In terms of assembly, homodimer. Dimers associate into a tetramer to form the enzymatically active phosphorylase A. Requires pyridoxal 5'-phosphate as cofactor. Phosphorylation of Ser-15 converts phosphorylase B (unphosphorylated) to phosphorylase A.

It carries out the reaction [(1-&gt;4)-alpha-D-glucosyl](n) + phosphate = [(1-&gt;4)-alpha-D-glucosyl](n-1) + alpha-D-glucose 1-phosphate. With respect to regulation, activity of phosphorylase is controlled both by allosteric means (through the non-covalent binding of metabolites) and by covalent modification. Thus AMP allosterically activates, whereas ATP, ADP, and glucose-6-phosphate allosterically inhibit, phosphorylase B. In terms of biological role, glycogen phosphorylase that regulates glycogen mobilization. Phosphorylase is an important allosteric enzyme in carbohydrate metabolism. Enzymes from different sources differ in their regulatory mechanisms and in their natural substrates. However, all known phosphorylases share catalytic and structural properties. The polypeptide is Glycogen phosphorylase, brain form (PYGB) (Ovis aries (Sheep)).